A 696-amino-acid polypeptide reads, in one-letter code: Elongation factor G (696 aa).

The region spanning glutamate 8–threonine 286 is the tr-type G domain. GTP is bound by residues alanine 17 to threonine 24, aspartate 81 to histidine 85, and asparagine 135 to aspartate 138.

The protein belongs to the TRAFAC class translation factor GTPase superfamily. Classic translation factor GTPase family. EF-G/EF-2 subfamily.

The protein resides in the cytoplasm. In terms of biological role, catalyzes the GTP-dependent ribosomal translocation step during translation elongation. During this step, the ribosome changes from the pre-translocational (PRE) to the post-translocational (POST) state as the newly formed A-site-bound peptidyl-tRNA and P-site-bound deacylated tRNA move to the P and E sites, respectively. Catalyzes the coordinated movement of the two tRNA molecules, the mRNA and conformational changes in the ribosome. This chain is Elongation factor G, found in Sulfurimonas denitrificans (strain ATCC 33889 / DSM 1251) (Thiomicrospira denitrificans (strain ATCC 33889 / DSM 1251)).